Reading from the N-terminus, the 243-residue chain is NAD-dependent protein deacylase (243 aa).

One can recognise a Deacetylase sirtuin-type domain in the interval 1-234 (MYQHIVVLTG…PKLVDTILAG (234 aa)). 10 to 29 (GAGISAESGLRTFRDQDGLW) contacts NAD(+). Positions 54 and 57 each coordinate substrate. 91-94 (QNID) is a binding site for NAD(+). The active-site Proton acceptor is the H109. C117 and C136 together coordinate Zn(2+). NAD(+) contacts are provided by residues 176-178 (GTS), 202-204 (NLQ), and A220.

Belongs to the sirtuin family. Class III subfamily. The cofactor is Zn(2+).

The protein resides in the cytoplasm. It catalyses the reaction N(6)-acetyl-L-lysyl-[protein] + NAD(+) + H2O = 2''-O-acetyl-ADP-D-ribose + nicotinamide + L-lysyl-[protein]. It carries out the reaction N(6)-succinyl-L-lysyl-[protein] + NAD(+) + H2O = 2''-O-succinyl-ADP-D-ribose + nicotinamide + L-lysyl-[protein]. Its function is as follows. NAD-dependent lysine deacetylase and desuccinylase that specifically removes acetyl and succinyl groups on target proteins. Modulates the activities of several proteins which are inactive in their acylated form. The protein is NAD-dependent protein deacylase of Shewanella oneidensis (strain ATCC 700550 / JCM 31522 / CIP 106686 / LMG 19005 / NCIMB 14063 / MR-1).